A 375-amino-acid chain; its full sequence is N-acetyldiaminopimelate deacetylase (375 aa).

The active site involves Asp69. Residue Glu128 is the Proton acceptor of the active site.

This sequence belongs to the peptidase M20A family. N-acetyldiaminopimelate deacetylase subfamily.

It catalyses the reaction N-acetyl-(2S,6S)-2,6-diaminopimelate + H2O = (2S,6S)-2,6-diaminopimelate + acetate. It participates in amino-acid biosynthesis; L-lysine biosynthesis via DAP pathway; LL-2,6-diaminopimelate from (S)-tetrahydrodipicolinate (acetylase route): step 3/3. Functionally, catalyzes the conversion of N-acetyl-diaminopimelate to diaminopimelate and acetate. The chain is N-acetyldiaminopimelate deacetylase from Priestia megaterium (strain ATCC 12872 / QMB1551) (Bacillus megaterium).